The primary structure comprises 383 residues: Succinyl-diaminopimelate desuccinylase (383 aa).

A Zn(2+)-binding site is contributed by histidine 73. The active site involves aspartate 75. Position 107 (aspartate 107) interacts with Zn(2+). Residue glutamate 141 is the Proton acceptor of the active site. Positions 142, 170, and 356 each coordinate Zn(2+).

This sequence belongs to the peptidase M20A family. DapE subfamily. As to quaternary structure, homodimer. The cofactor is Zn(2+). Requires Co(2+) as cofactor.

It catalyses the reaction N-succinyl-(2S,6S)-2,6-diaminopimelate + H2O = (2S,6S)-2,6-diaminopimelate + succinate. It participates in amino-acid biosynthesis; L-lysine biosynthesis via DAP pathway; LL-2,6-diaminopimelate from (S)-tetrahydrodipicolinate (succinylase route): step 3/3. Its function is as follows. Catalyzes the hydrolysis of N-succinyl-L,L-diaminopimelic acid (SDAP), forming succinate and LL-2,6-diaminopimelate (DAP), an intermediate involved in the bacterial biosynthesis of lysine and meso-diaminopimelic acid, an essential component of bacterial cell walls. The chain is Succinyl-diaminopimelate desuccinylase from Pseudomonas syringae pv. tomato (strain ATCC BAA-871 / DC3000).